The sequence spans 284 residues: 2-dehydro-3-deoxyphosphooctonate aldolase (284 aa).

It belongs to the KdsA family.

It is found in the cytoplasm. It carries out the reaction D-arabinose 5-phosphate + phosphoenolpyruvate + H2O = 3-deoxy-alpha-D-manno-2-octulosonate-8-phosphate + phosphate. The protein operates within carbohydrate biosynthesis; 3-deoxy-D-manno-octulosonate biosynthesis; 3-deoxy-D-manno-octulosonate from D-ribulose 5-phosphate: step 2/3. It participates in bacterial outer membrane biogenesis; lipopolysaccharide biosynthesis. The sequence is that of 2-dehydro-3-deoxyphosphooctonate aldolase from Salmonella enteritidis PT4 (strain P125109).